The primary structure comprises 34 residues: Photosystem II reaction center protein T (34 aa).

A helical membrane pass occupies residues 3–23 (ALVYTFLLVGTLGIIFFAIFF).

Belongs to the PsbT family. In terms of assembly, PSII is composed of 1 copy each of membrane proteins PsbA, PsbB, PsbC, PsbD, PsbE, PsbF, PsbH, PsbI, PsbJ, PsbK, PsbL, PsbM, PsbT, PsbY, PsbZ, Psb30/Ycf12, at least 3 peripheral proteins of the oxygen-evolving complex and a large number of cofactors. It forms dimeric complexes.

Its subcellular location is the plastid. It localises to the chloroplast thylakoid membrane. Functionally, found at the monomer-monomer interface of the photosystem II (PS II) dimer, plays a role in assembly and dimerization of PSII. PSII is a light-driven water plastoquinone oxidoreductase, using light energy to abstract electrons from H(2)O, generating a proton gradient subsequently used for ATP formation. The chain is Photosystem II reaction center protein T from Klebsormidium bilatum (Filamentous green alga).